Reading from the N-terminus, the 449-residue chain is Hyaluronidase-1 (449 aa).

The first 23 residues, 1 to 23, serve as a signal peptide directing secretion; it reads MYHLWIKCLAAWIFLKRCNGVHA. 2 disulfide bridges follow: cysteine 47–cysteine 340 and cysteine 211–cysteine 227. N-linked (GlcNAc...) asparagine glycans are attached at residues asparagine 67, asparagine 103, and asparagine 111. Glutamate 135 serves as the catalytic Proton donor. Asparagine 153 carries N-linked (GlcNAc...) asparagine glycosylation. A glycan (N-linked (GlcNAc...) asparagine) is linked at asparagine 357. 3 cysteine pairs are disulfide-bonded: cysteine 365/cysteine 376, cysteine 370/cysteine 427, and cysteine 429/cysteine 438. Asparagine 401 carries an N-linked (GlcNAc...) asparagine glycan. The EGF-like domain occupies 427–438; sequence CQCYQGWKGLYC.

Belongs to the glycosyl hydrolase 56 family. Monomer. Expressed by the venom gland.

Its subcellular location is the secreted. The catalysed reaction is Random hydrolysis of (1-&gt;4)-linkages between N-acetyl-beta-D-glucosamine and D-glucuronate residues in hyaluronate.. Its function is as follows. Snake venom endo-hyaluronidase that degrades hyaluronan to smaller oligosaccharide fragments. In venom, it is not toxic by itself, but increases the diffusion of other venom proteins by degrading the extracellular matrix. In addition, it displays antiedematogenic activity. This Bitis arietans (African puff adder) protein is Hyaluronidase-1.